Here is a 291-residue protein sequence, read N- to C-terminus: ATP synthase gamma chain (291 aa).

The protein belongs to the ATPase gamma chain family. As to quaternary structure, F-type ATPases have 2 components, CF(1) - the catalytic core - and CF(0) - the membrane proton channel. CF(1) has five subunits: alpha(3), beta(3), gamma(1), delta(1), epsilon(1). CF(0) has three main subunits: a, b and c.

The protein resides in the cell inner membrane. Its function is as follows. Produces ATP from ADP in the presence of a proton gradient across the membrane. The gamma chain is believed to be important in regulating ATPase activity and the flow of protons through the CF(0) complex. In Ruegeria pomeroyi (strain ATCC 700808 / DSM 15171 / DSS-3) (Silicibacter pomeroyi), this protein is ATP synthase gamma chain.